The following is a 121-amino-acid chain: Phosphoribosyl-ATP pyrophosphatase (121 aa).

Belongs to the PRA-PH family.

It localises to the cytoplasm. The catalysed reaction is 1-(5-phospho-beta-D-ribosyl)-ATP + H2O = 1-(5-phospho-beta-D-ribosyl)-5'-AMP + diphosphate + H(+). It participates in amino-acid biosynthesis; L-histidine biosynthesis; L-histidine from 5-phospho-alpha-D-ribose 1-diphosphate: step 2/9. The polypeptide is Phosphoribosyl-ATP pyrophosphatase (Nitrosospira multiformis (strain ATCC 25196 / NCIMB 11849 / C 71)).